The chain runs to 382 residues: Mannitol-1-phosphate 5-dehydrogenase (382 aa).

NAD(+) is bound at residue 3-14 (ALHFGAGNIGRG). At Lys269 the chain carries N6-acetyllysine.

This sequence belongs to the mannitol dehydrogenase family.

It catalyses the reaction D-mannitol 1-phosphate + NAD(+) = beta-D-fructose 6-phosphate + NADH + H(+). The sequence is that of Mannitol-1-phosphate 5-dehydrogenase from Escherichia coli O9:H4 (strain HS).